The chain runs to 247 residues: uncharacterized protein (247 aa).

A signal peptide spans 1–35 (MWGPGVTAEGLSVAPAPPPLLPLLLLLALALVAPS). Asn-57 carries N-linked (GlcNAc...) asparagine glycosylation. Residues 82–102 (LSGLLILLVLFAIGYFLQRII) form a helical membrane-spanning segment. Residues 109–179 (YPRGQARPGQ…GGRSDPSCAS (71 aa)) are disordered. Positions 160 to 172 (SGGGGRGRGGGGR) are enriched in gly residues.

It is found in the membrane. This is an uncharacterized protein from Homo sapiens (Human).